The following is a 927-amino-acid chain: Probable dipeptidyl-aminopeptidase B (927 aa).

2 disordered regions span residues 1–44 and 58–101; these read MAPA…TTSI and GHFE…KNDG. The Cytoplasmic portion of the chain corresponds to 1–108; sequence MAPAPGMAPY…NDGMNRGMRR (108 aa). Basic and acidic residues-rich tracts occupy residues 19–36 and 58–70; these read HRPEHNDESTGRMSHESE and GHFELDDHDPMKE. The chain crosses the membrane as a helical; Signal-anchor for type II membrane protein span at residues 109-129; the sequence is TLIIVAGLLISAWVVGLFFYV. The Vacuolar portion of the chain corresponds to 130 to 927; the sequence is SHKSYKPASQ…RSIQPILPIL (798 aa). Residues Asn365 and Asn530 are each glycosylated (N-linked (GlcNAc...) asparagine). The active-site Charge relay system is Ser769. Asn828 carries an N-linked (GlcNAc...) asparagine glycan. Active-site charge relay system residues include Asp846 and His879.

The protein belongs to the peptidase S9B family.

Its subcellular location is the vacuole membrane. The catalysed reaction is Release of an N-terminal dipeptide, Xaa-Yaa-|-Zaa-, from a polypeptide, preferentially when Yaa is Pro, provided Zaa is neither Pro nor hydroxyproline.. Type IV dipeptidyl-peptidase which removes N-terminal dipeptides sequentially from polypeptides having unsubstituted N-termini provided that the penultimate residue is proline. This is Probable dipeptidyl-aminopeptidase B (DAPB) from Podospora anserina (strain S / ATCC MYA-4624 / DSM 980 / FGSC 10383) (Pleurage anserina).